Reading from the N-terminus, the 46-residue chain is Bottromycin D (46 aa).

Positions 10–46 (MTADFLNDDPNNAELSSLEMEELESWGAWSDDTDQSV) are excised as a propeptide.

In terms of processing, the precursor peptide is first ribosomally synthesized and then highly tailored by specific enzymes to yield the final natural product. These modifications include several methylations, cyclization and the formation of t-Leu and Thia-beta-Ala residues.

It is found in the secreted. Bottromycin D is a ribosomally synthesized and post-translationally modified peptide (RiPP) that displays antibiotic activity against methicillin-resistant S.aureus (MRSA). This Streptomyces sp protein is Bottromycin D.